A 631-amino-acid chain; its full sequence is Occlusion-derived virus envelope protein E66 (631 aa).

This sequence belongs to the baculoviridae E66 family.

The protein resides in the virion membrane. Functionally, component of the polyhedra envelope. The protein is Occlusion-derived virus envelope protein E66 of Leucania separata nucleopolyhedrovirus (LsNPV).